Reading from the N-terminus, the 218-residue chain is Major NAD(P)H-flavin oxidoreductase (218 aa).

FMN-binding positions include 12 to 16 (RYTSK) and Asn-73. 154 to 159 (LARLNI) lines the NAD(+) pocket. Residues 165 to 166 (EG) and 206 to 208 (KSR) contribute to the FMN site.

Belongs to the nitroreductase family. Homodimer. FMN serves as cofactor.

Functionally, involved in bioluminescence. It is a good supplier of reduced flavin mononucleotide (FMNH2) to the bioluminescence reaction. Major FMN reductase. It is capable of using both NADH and NADPH as electron donors. As electron acceptor, FMN is the most effective, FAD is considerably effective, and riboflavin is the least effective. In Aliivibrio fischeri (Vibrio fischeri), this protein is Major NAD(P)H-flavin oxidoreductase.